Consider the following 1938-residue polypeptide: Myosin-1 (1938 aa).

Residues 33–82 enclose the Myosin N-terminal SH3-like domain; that stretch reads DAKTSVFVADPKESFVKATVQSREGGKVTAKTEAGATVTVKEDQVFPMNP. Residues T64 and T69 each carry the phosphothreonine modification. The Myosin motor domain maps to 86–781; it reads DKIEDMAMMT…LLGLLEEMRD (696 aa). K130 is modified (N6,N6,N6-trimethyllysine). Residue 179 to 186 participates in ATP binding; it reads GESGAGKT. Y389 carries the post-translational modification Phosphotyrosine. A Phosphothreonine modification is found at T419. Y424 carries the post-translational modification Phosphotyrosine. Position 625 is a phosphoserine (S625). The actin-binding stretch occupies residues 658–680; it reads LNKLMTNLRSTHPHFVRCIIPNE. Position 756 is a pros-methylhistidine (H756). Residues 760-774 are actin-binding; sequence KFGHTKVFFKAGLLG. In terms of domain architecture, IQ spans 784 to 813; sequence LAQLITRTQARCRGFLARVEYQKMVERRES. Positions 842–1938 form a coiled coil; it reads LLKSAETEKE…EVHTKIISEE (1097 aa). S1091 and S1095 each carry phosphoserine. Disordered regions lie at residues 1124 to 1146 and 1152 to 1171; these read EIEA…SREL and RLEE…KKRE. Positions 1127 to 1146 are enriched in basic and acidic residues; it reads AERASRAKAEKQRSDLSREL. Phosphoserine is present on residues S1161 and S1236. A Phosphothreonine modification is found at T1240. 2 positions are modified to phosphoserine: S1242 and S1260. Phosphothreonine is present on residues T1264 and T1285. S1287, S1291, S1302, and S1305 each carry phosphoserine. The residue at position 1463 (Y1463) is a Phosphotyrosine. T1466 carries the post-translational modification Phosphothreonine. Phosphoserine is present on S1473. The residue at position 1491 (Y1491) is a Phosphotyrosine. S1494 bears the Phosphoserine mark. Residue T1500 is modified to Phosphothreonine. S1513 is subject to Phosphoserine. T1516 carries the phosphothreonine modification. A phosphoserine mark is found at S1541, S1553, S1573, S1599, S1602, S1713, and S1725. T1729 and T1735 each carry phosphothreonine.

It belongs to the TRAFAC class myosin-kinesin ATPase superfamily. Myosin family. Muscle myosin is a hexameric protein that consists of 2 heavy chain subunits (MHC), 2 alkali light chain subunits (MLC) and 2 regulatory light chain subunits (MLC-2). Interacts with SLC26A5.

It localises to the cytoplasm. The protein localises to the myofibril. Functionally, required for normal hearing. It plays a role in cochlear amplification of auditory stimuli, likely through the positive regulation of prestin (SLC26A5) activity and outer hair cell (OHC) electromotility. This is Myosin-1 (MYH1) from Bos taurus (Bovine).